A 448-amino-acid polypeptide reads, in one-letter code: Oxysterol-binding protein homolog 6 (448 aa).

The interval 1 to 42 is disordered; sequence MGSKKLTVGSDSHRLSKSSFSSNKSSHSATKDQPIDTDDIDE. S16 is modified (phosphoserine). The span at 17 to 28 shows a compositional bias: low complexity; that stretch reads KSSFSSNKSSHS. Positions 54 to 391 are OSBP-related domain (ORD); it reads IISQLRPGCD…PGEDLDYCIY (338 aa). Residues 64–69, 126–129, and 157–158 contribute to the a 1,2-diacyl-sn-glycero-3-phospho-(1D-myo-inositol 4-phosphate) site; these read LTRITL, KPLN, and HH. A 1,2-diacyl-sn-glycero-3-phospho-L-serine contacts are provided by residues 64 to 69 and N129; that span reads LTRITL. Residue S183 participates in a 1,2-diacyl-sn-glycero-3-phospho-L-serine binding. Positions 351, 355, and 359 each coordinate a 1,2-diacyl-sn-glycero-3-phospho-(1D-myo-inositol 4-phosphate).

Belongs to the OSBP family. As to quaternary structure, interacts with the AAA ATPase VPS4; regulates OSH6 membrane association. VPS4 is required for membrane dissociation of OSH6.

Its subcellular location is the cytoplasm. The protein resides in the cell membrane. It localises to the endoplasmic reticulum membrane. The enzyme catalyses a 1,2-diacyl-sn-glycero-3-phospho-L-serine(in) = a 1,2-diacyl-sn-glycero-3-phospho-L-serine(out). Its function is as follows. Lipid transport protein (LTP) involved in non-vesicular transfer of lipids between membranes. Functions in phosphoinositide-coupled directional transport of various lipids by carrying the lipid molecule in a hydrophobic pocket and transferring it between membranes through the cytosol. Involved in maintenance of intracellular sterol distribution and homeostasis. Catalyzes the lipid countertransport between the endoplasmic reticulum (ER) and the plasma membrane (PM). Specifically exchanges phosphatidylserine (PS) with phosphatidylinositol 4-phosphate (PI4P), delivering phosphatidylserine to the PM in exchange for PI4P, which is delivered to the ER-localized PI4P phosphatase SAC1 for degradation. Thus, by maintaining a PI4P gradient at the ER/PM interface, SAC1 drives PS transport. Binds phosphatidylserine and PI4P in a mutually exclusive manner. Also binds phosphatidic acid (PA). The sequence is that of Oxysterol-binding protein homolog 6 from Saccharomyces cerevisiae (strain ATCC 204508 / S288c) (Baker's yeast).